Reading from the N-terminus, the 364-residue chain is MNKLALYCRIGFEKEVAAEITDTAAERGVFGFARIQENAGYVIFECYQPGEADRLAREIPFTQLIFARQLVVVSDLLQNLPTTDRITPILQKYQEVSPHLKLQQSSELWVETADTNEAKELSAFCRKFTVPLRQALKKQGWLNFKQIKDSGMTLHCLFVRSDACYAGYSYNRNHSPYFMGIPRLKFPTEAPSRSTLKLEEAILTFIPREEESKRLNENMIGVDLGACPGGWTYQLVKRGLFVYAVDHGKMAASLHETGRIEHCSEDGFKFQPPKRKKADWLVCDMVEQPGRIVALIGKWLSNEWCHETIFNLKLPMKKRYTEVRRCLQKLADELTQSGLKFRMQAKHLYHDREEITVHVRTWRH.

S-adenosyl-L-methionine contacts are provided by residues S194, C227–G230, D246, D266, and D284. K313 (proton acceptor) is an active-site residue.

This sequence belongs to the class I-like SAM-binding methyltransferase superfamily. RNA methyltransferase RlmE family. RlmM subfamily. As to quaternary structure, monomer.

The protein resides in the cytoplasm. It catalyses the reaction cytidine(2498) in 23S rRNA + S-adenosyl-L-methionine = 2'-O-methylcytidine(2498) in 23S rRNA + S-adenosyl-L-homocysteine + H(+). In terms of biological role, catalyzes the 2'-O-methylation at nucleotide C2498 in 23S rRNA. The polypeptide is Ribosomal RNA large subunit methyltransferase M (Actinobacillus succinogenes (strain ATCC 55618 / DSM 22257 / CCUG 43843 / 130Z)).